Reading from the N-terminus, the 194-residue chain is Potassium-transporting ATPase KdpC subunit (194 aa).

The chain crosses the membrane as a helical span at residues 12–34 (LFLLLLTGGVYPLLTTALGQWWF).

This sequence belongs to the KdpC family. As to quaternary structure, the system is composed of three essential subunits: KdpA, KdpB and KdpC.

The protein resides in the cell inner membrane. Its function is as follows. Part of the high-affinity ATP-driven potassium transport (or Kdp) system, which catalyzes the hydrolysis of ATP coupled with the electrogenic transport of potassium into the cytoplasm. This subunit acts as a catalytic chaperone that increases the ATP-binding affinity of the ATP-hydrolyzing subunit KdpB by the formation of a transient KdpB/KdpC/ATP ternary complex. The polypeptide is Potassium-transporting ATPase KdpC subunit (Salmonella agona (strain SL483)).